Consider the following 431-residue polypeptide: MPQLTKSAELFELAKKFIPGGVNSPVRAFKSVGGTPIYMAKGEGAYMTDVDGNTYLDYVGSWGPFILGSMQPRVTAAIEYTLRNIGSSFGTPIEMEIEIAELLSRIVPSIEMVRMVNSGTEATMSAVRLARGYTGRDKIIKFEGCYHGHGDSFLIKAGSGVLTLGSPDSPGVTKGTAADTLNATYNDIESVRLLVNENRGDIAAIIIEPVAGNTGVIPAKKEFLVALRELCDQEGIVLIFDEVMCGFRVALGGAQELYGVTPDLTTMGKIIGGGLPVGAFGGKRKIMENVAPLGSVYQAGTLSGNPLALTAGLETLKILMEEDPYPELERKAAFLEAGFRENMQKLGLNYVQNRVGSMACLFFTETPVVDYKSAITADVAKYGKYFHSMLDQGIYLAPSQFEAMFTSYVHSDEDLEKTVKANYNALVAAHQ.

Lys-269 is modified (N6-(pyridoxal phosphate)lysine).

It belongs to the class-III pyridoxal-phosphate-dependent aminotransferase family. HemL subfamily. As to quaternary structure, homodimer. Requires pyridoxal 5'-phosphate as cofactor.

It is found in the cytoplasm. It catalyses the reaction (S)-4-amino-5-oxopentanoate = 5-aminolevulinate. It functions in the pathway porphyrin-containing compound metabolism; protoporphyrin-IX biosynthesis; 5-aminolevulinate from L-glutamyl-tRNA(Glu): step 2/2. It participates in porphyrin-containing compound metabolism; chlorophyll biosynthesis. This Chlorobium limicola (strain DSM 245 / NBRC 103803 / 6330) protein is Glutamate-1-semialdehyde 2,1-aminomutase.